Reading from the N-terminus, the 497-residue chain is tRNA-2-methylthio-N(6)-dimethylallyladenosine synthase (497 aa).

The disordered stretch occupies residues 1–48; sequence MTGTSNIPTHGKEHKDAPALLPLPAPNTHHTHAAHPGDPSHDRHPSRG. Over residues 18 to 28 the composition is skewed to low complexity; sequence PALLPLPAPNT. The region spanning 48-165 is the MTTase N-terminal domain; sequence GKLFIKTHGC…LPDMIRARRE (118 aa). [4Fe-4S] cluster-binding residues include cysteine 57, cysteine 94, cysteine 128, cysteine 202, cysteine 206, and cysteine 209. Positions 188-430 constitute a Radical SAM core domain; that stretch reads RAEGPSAFVS…QKHINAYAAD (243 aa). The 64-residue stretch at 433–496 folds into the TRAM domain; it reads KRMIGTVQTV…TNSLRGRVHT (64 aa).

Belongs to the methylthiotransferase family. MiaB subfamily. Monomer. [4Fe-4S] cluster serves as cofactor.

It is found in the cytoplasm. It catalyses the reaction N(6)-dimethylallyladenosine(37) in tRNA + (sulfur carrier)-SH + AH2 + 2 S-adenosyl-L-methionine = 2-methylsulfanyl-N(6)-dimethylallyladenosine(37) in tRNA + (sulfur carrier)-H + 5'-deoxyadenosine + L-methionine + A + S-adenosyl-L-homocysteine + 2 H(+). In terms of biological role, catalyzes the methylthiolation of N6-(dimethylallyl)adenosine (i(6)A), leading to the formation of 2-methylthio-N6-(dimethylallyl)adenosine (ms(2)i(6)A) at position 37 in tRNAs that read codons beginning with uridine. In Xylella fastidiosa (strain M23), this protein is tRNA-2-methylthio-N(6)-dimethylallyladenosine synthase.